The chain runs to 664 residues: Prelamin-A/C (664 aa).

M1 carries the N-acetylmethionine modification. The interval 1–25 (METPSQRRATRSGAQASSTPLSPTR) is disordered. The segment at 1–33 (METPSQRRATRSGAQASSTPLSPTRITRLQEKE) is head. Residues 1-130 (METPSQRRAT…TKKEGDLIAA (130 aa)) form an interaction with MLIP region. T3 carries the post-translational modification Phosphothreonine. S5 carries the post-translational modification Phosphoserine. Phosphothreonine is present on T10. Phosphoserine is present on residues S12 and S18. T19 bears the Phosphothreonine mark. S22 carries the phosphoserine; by CDK1 modification. An IF rod domain is found at 31–387 (EKEDLQELND…KLLEGEEERL (357 aa)). K32 carries the post-translational modification N6-acetyllysine; alternate. An N6-succinyllysine; alternate modification is found at K32. Residue K32 forms a Glycyl lysine isopeptide (Lys-Gly) (interchain with G-Cter in SUMO2); alternate linkage. The interval 34 to 70 (DLQELNDRLAVYIDRVRSLETENAGLRLRITESEEVV) is coil 1A. 3 positions are modified to phosphoserine: S51, S66, and S71. Residues 71–80 (SREVSGIKAA) are linker 1. Residues K78 and K97 each carry the N6-acetyllysine modification. The interval 81–218 (YEAELGDARK…NIYSEELRET (138 aa)) is coil 1B. K97 is covalently cross-linked (Glycyl lysine isopeptide (Lys-Gly) (interchain with G-Cter in SUMO2)). The residue at position 107 (S107) is a Phosphoserine. 6 positions are modified to N6-acetyllysine: K108, K114, K123, K135, K144, and K155. Position 171 is an N6-acetyllysine; alternate (K171). At K171 the chain carries N6-succinyllysine; alternate. K171 is covalently cross-linked (Glycyl lysine isopeptide (Lys-Gly) (interchain with G-Cter in SUMO2); alternate). Residues K180, K201, and K208 each carry the N6-acetyllysine modification. Residue K201 forms a Glycyl lysine isopeptide (Lys-Gly) (interchain with G-Cter in SUMO2); alternate linkage. Residue K201 forms a Glycyl lysine isopeptide (Lys-Gly) (interchain with G-Cter in SUMO); alternate linkage. K208 participates in a covalent cross-link: Glycyl lysine isopeptide (Lys-Gly) (interchain with G-Cter in SUMO2). The residue at position 212 (S212) is a Phosphoserine. Glycyl lysine isopeptide (Lys-Gly) (interchain with G-Cter in SUMO2) cross-links involve residues K219 and K233. Residues 219–242 (KRRHETRLVEIDNGKQREFESRLA) form a linker 2 region. 4 positions are modified to N6-acetyllysine: K233, K260, K265, and K270. The segment at 243–383 (DALQELRAQH…HAYRKLLEGE (141 aa)) is coil 2. The necessary and sufficient for the interaction with IFFO1 stretch occupies residues 259–331 (YKKELEKTYS…DLEDSLARER (73 aa)). K260 participates in a covalent cross-link: Glycyl lysine isopeptide (Lys-Gly) (interchain with G-Cter in SUMO2); alternate. A Glycyl lysine isopeptide (Lys-Gly) (interchain with G-Cter in SUMO2); alternate cross-link involves residue K270. S277 is subject to Phosphoserine. Residue S282 is modified to Phosphoserine; by ATR. S301 and S307 each carry phosphoserine. K311 participates in a covalent cross-link: Glycyl lysine isopeptide (Lys-Gly) (interchain with G-Cter in SUMO2); alternate. 3 positions are modified to N6-acetyllysine: K311, K316, and K341. Residues K366 and K378 each participate in a glycyl lysine isopeptide (Lys-Gly) (interchain with G-Cter in SUMO2) cross-link. The disordered stretch occupies residues 384–442 (EERLRLSPSPTSQRSRGRASSHSSQTQGGGSVTKKRKLESTESRSSFSQHARTSGRVAV). Residues 384–664 (EERLRLSPSP…TQSPQNCSIM (281 aa)) are tail. S390 is modified (phosphoserine). The residue at position 392 (S392) is a Phosphoserine; by CDK1. Phosphoserine; by ATR is present on S395. A phosphoserine mark is found at S398, S403, S404, S406, S407, and S414. T416 bears the Phosphothreonine mark. An N6-acetyllysine modification is found at K417. Residues K417 and K420 each participate in a glycyl lysine isopeptide (Lys-Gly) (interchain with G-Cter in SUMO2) cross-link. Positions 417 to 422 (KKRKLE) match the Nuclear localization signal motif. Phosphoserine is present on residues S423, S426, S429, and S431. Positions 426 to 435 (SRSSFSQHAR) are enriched in polar residues. The LTD domain occupies 428–545 (SSFSQHARTS…EEVAMRKLVR (118 aa)). A Glycyl lysine isopeptide (Lys-Gly) (interchain with G-Cter in SUMO2); alternate cross-link involves residue K450. N6-acetyllysine is present on residues K450 and K457. Phosphoserine is present on residues S458 and S463. Glycyl lysine isopeptide (Lys-Gly) (interchain with G-Cter in SUMO2) cross-links involve residues K470 and K486. K486 carries the N6-acetyllysine modification. Phosphothreonine is present on residues T496, T505, and T510. A phosphoserine mark is found at S533 and S546. The residue at position 548 (T548) is a Phosphothreonine. The segment at 552–576 (DDEDEDGDDLLHHHHGSHCSSSGDP) is disordered. A phosphoserine mark is found at S568 and S571. K597 participates in a covalent cross-link: Glycyl lysine isopeptide (Lys-Gly) (interchain with G-Cter in SUMO2); alternate. Residue K597 forms a Glycyl lysine isopeptide (Lys-Gly) (interchain with G-Cter in SUMO1); alternate linkage. The segment at 598–619 (ASASGSGAQVGGPISSGSSASS) is disordered. Phosphoserine is present on residues S612, S613, S616, and S619. O-linked (GlcNAc) serine glycans are attached at residues S625 and S628. Residues S628, S632, S636, and S652 each carry the phosphoserine modification. Positions 647–661 (LLGNSSPRTQSPQNC) are cleaved as a propeptide — removed in Lamin-A/C form. C661 is modified (cysteine methyl ester). Residue C661 is the site of S-farnesyl cysteine attachment. Positions 662 to 664 (SIM) are cleaved as a propeptide — removed in Prelamin-A/C form and in Lamin-A/C form.

This sequence belongs to the intermediate filament family. Homodimer of lamin A and lamin C. Lamin dimers then assemble into dimeric head-to-tail polymers. Ultimately, two head-to-tail polymers assemble laterally into a protofilament with a uniformly shaped rod of 3.5 nm in diameter. Interacts with lamin-associated polypeptides IA, IB and TMPO-alpha, RB1 and with emerin. Interacts with SREBF1, SREBF2, SUN2 and TMEM43. Interacts with TMEM201. Proteolytically processed isoform A interacts with NARF. Interacts with SUN1. Interacts with MLIP. Interacts with DMPK; may regulate nuclear envelope stability. Interacts with SUV39H1; the interaction increases stability of SUV39H1. Interacts with SYNE2. Interacts with ITSN1 isoform 2. Interacts with IFFO1; enables the formation of an interior nucleoskeleton that is recruited to DNA double-strand breaks. In terms of assembly, interacts with EMD. As to quaternary structure, interacts (via C-terminus) with LEMD2 (via N-terminus) (in vitro). Proteolytic cleavage of the C-terminal of 18 residues of prelamin-A/C results in the production of lamin-A/C. The prelamin-A/C maturation pathway includes farnesylation of CAAX motif by protein farnesyltransferase (FNTA and FNTB), removal of the last three amino acids (-AAX) by RCE1/FACE2 and/or ZMPSTE24, methylation of the C-terminal cysteine by ICMT and endoproteolytic removal of the last 15 C-terminal amino acids by ZMPSTE24. Proteolytic cleavage requires prior farnesylation and methylation, and absence of these blocks cleavage. In terms of processing, farnesylation of prelamin-A/C facilitates nuclear envelope targeting. Post-translationally, phosphorylation plays a key role in lamin organization, subcellular localization and nuclear envelope disintegration. Phosphorylation by CDK1 at Ser-22 and Ser-392 at the onset of mitosis drives lamin disassembly and nuclear envelope breakdown. Phosphorylation at Ser-22 and Ser-392 during interphase promotes localization to the nucleoplasm and regulates lamina assembly. Phosphorylation at Ser-22, Ser-392 and Ser-628 during interphase causes redistribution between the nucleus and the cytoplasm. Phosphorylation at Ser-22 by CDK1 regulates matrix stiffness. Phosphorylation status of Ser-22 determines its localization between double-strand break (DSB) sites and the nuclear matrix. Phosphorylated by ATR at Ser-282 in response to DNA damage, leading to lamin disassembly and nuclear envelope rupture. Phosphorylation also regulates stability in micronuclei arising from genome instability: phosphorylation at Ser-395 by ATR in response to genome instability and double-stranded DNA breaks primes LMNA for subsequent phosphorylation at Ser-392 by CDK1 and micronuclei envelope rupture. The rupture of micronuclear envelope triggers the cGAS-STING pathway thereby activating the type I interferon response and innate immunity. Acetylation by KAT8 is required for nuclear architecture. In terms of processing, sumoylation is necessary for the localization to the nuclear envelope. As to expression, in the arteries, prelamin-A/C accumulation is not observed in young healthy vessels but is prevalent in medial vascular smooth muscle cells (VSMCs) from aged individuals and in atherosclerotic lesions, where it often colocalizes with senescent and degenerate VSMCs. Prelamin-A/C expression increases with age and disease. In normal aging, the accumulation of prelamin-A/C is caused in part by the down-regulation of ZMPSTE24/FACE1 in response to oxidative stress.

It is found in the nucleus lamina. Its subcellular location is the nucleus envelope. The protein localises to the nucleus. The protein resides in the nucleoplasm. It localises to the nucleus matrix. It is found in the nucleus speckle. In terms of biological role, lamins are intermediate filament proteins that assemble into a filamentous meshwork, and which constitute the major components of the nuclear lamina, a fibrous layer on the nucleoplasmic side of the inner nuclear membrane. Lamins provide a framework for the nuclear envelope, bridging the nuclear envelope and chromatin, thereby playing an important role in nuclear assembly, chromatin organization, nuclear membrane and telomere dynamics. Lamin A and C also regulate matrix stiffness by conferring nuclear mechanical properties. The structural integrity of the lamina is strictly controlled by the cell cycle, as seen by the disintegration and formation of the nuclear envelope in prophase and telophase, respectively. Lamin A and C are present in equal amounts in the lamina of mammals. Also invoved in DNA repair: recruited by DNA repair proteins XRCC4 and IFFO1 to the DNA double-strand breaks (DSBs) to prevent chromosome translocation by immobilizing broken DNA ends. Required for normal development of peripheral nervous system and skeletal muscle and for muscle satellite cell proliferation. Required for osteoblastogenesis and bone formation. Also prevents fat infiltration of muscle and bone marrow, helping to maintain the volume and strength of skeletal muscle and bone. Required for cardiac homeostasis. Functionally, prelamin-A/C can accelerate smooth muscle cell senescence. It acts to disrupt mitosis and induce DNA damage in vascular smooth muscle cells (VSMCs), leading to mitotic failure, genomic instability, and premature senescence. The chain is Prelamin-A/C (LMNA) from Homo sapiens (Human).